We begin with the raw amino-acid sequence, 130 residues long: Small ribosomal subunit protein uS9 (130 aa).

It belongs to the universal ribosomal protein uS9 family.

The polypeptide is Small ribosomal subunit protein uS9 (Anoxybacillus flavithermus (strain DSM 21510 / WK1)).